Reading from the N-terminus, the 525-residue chain is GMP synthase [glutamine-hydrolyzing] (525 aa).

The Glutamine amidotransferase type-1 domain occupies 9–207 (RILILDFGSQ…VLGICGCEAL (199 aa)). C86 serves as the catalytic Nucleophile. Catalysis depends on residues H181 and E183. The region spanning 208-400 (WTSATIIEDA…LGLPYDMLYR (193 aa)) is the GMPS ATP-PPase domain. 235-241 (SGGVDSS) is a binding site for ATP.

As to quaternary structure, homodimer.

The enzyme catalyses XMP + L-glutamine + ATP + H2O = GMP + L-glutamate + AMP + diphosphate + 2 H(+). It functions in the pathway purine metabolism; GMP biosynthesis; GMP from XMP (L-Gln route): step 1/1. Functionally, catalyzes the synthesis of GMP from XMP. The chain is GMP synthase [glutamine-hydrolyzing] from Yersinia pseudotuberculosis serotype IB (strain PB1/+).